The primary structure comprises 921 residues: GPI ethanolamine phosphate transferase 1 (921 aa).

A helical membrane pass occupies residues 37 to 57; that stretch reads PGHVALIAGLYEDVSAVTTGW. 2 N-linked (GlcNAc...) asparagine glycosylation sites follow: asparagine 69 and asparagine 132. 10 consecutive transmembrane segments (helical) span residues 386-406, 418-438, 441-461, 483-503, 509-529, 533-553, 561-581, 606-626, 640-660, and 679-699; these read ALITIGYLGWVAYALTTVIDL, TLIGTIISTSALTALYASFAI, SPLTYYAYAFFPVFFWEEVYA, FVSLVFNCAVYVGIIESLALG, ILTILFVIGAFWPIAYGFSFL, MALSITWFLSCIAMSTFTLLP, VNMIMLGGALMVLVGIIYLIL, LVGIQIGLTLLAALVTRSSAL, VMGWVVLVVSLLMPLAYRAKP, and FVILTISYEGLFYIAFSAVLV. Positions 715–737 are disordered; that stretch reads SANGAARSAPSPAKPHNLETSQT. The next 4 membrane-spanning stretches (helical) occupy residues 752–772, 795–815, 825–845, and 862–882; these read VALFFFVLFQAAFFSTGNVAS, AMLILKLLIPFALISANLGIL, ALFMVVMAISDILTLYFFWVV, and VIASLLCVFVAALEGVSAMFI.

The protein belongs to the PIGG/PIGN/PIGO family. PIGN subfamily.

Its subcellular location is the endoplasmic reticulum membrane. The protein operates within glycolipid biosynthesis; glycosylphosphatidylinositol-anchor biosynthesis. Ethanolamine phosphate transferase involved in glycosylphosphatidylinositol-anchor biosynthesis. Transfers ethanolamine phosphate to the first alpha-1,4-linked mannose of the glycosylphosphatidylinositol precursor of GPI-anchor. This chain is GPI ethanolamine phosphate transferase 1 (MCD4), found in Chaetomium globosum (strain ATCC 6205 / CBS 148.51 / DSM 1962 / NBRC 6347 / NRRL 1970) (Soil fungus).